Reading from the N-terminus, the 239-residue chain is DUP240 protein DFP3 (239 aa).

The Cytoplasmic segment spans residues 1–54 (MQPHLDNNSNNDDVKLDTLGEQNVLSSAENITLPEDTFKSYMTYLLYEMAHYKP). Residues 55-75 (MIFSFLALSVSILIVVIFHNV) form a helical membrane-spanning segment. Over 76–79 (KACD) the chain is Extracellular. The helical transmembrane segment at 80-104 (VVFGFSIFVTSILFLSTLIPFNVYI) threads the bilayer. Topologically, residues 105–239 (SDEGFRIKLL…RKQYPDADIP (135 aa)) are cytoplasmic.

This sequence belongs to the DUP/COS family. As to quaternary structure, interacts according to large scale protein interaction studies with MEC3 and ULP1.

The protein resides in the membrane. This chain is DUP240 protein DFP3, found in Saccharomyces cerevisiae (strain ATCC 204508 / S288c) (Baker's yeast).